The sequence spans 115 residues: NADH-ubiquinone oxidoreductase chain 3 (115 aa).

A run of 3 helical transmembrane segments spans residues 4 to 24 (LVALSVNIALSMCLITIAFWL), 55 to 75 (FFLVAITFLLFDLEIALLLPL), and 87 to 107 (MMLTSFILVSVLALGLAYEWM).

Belongs to the complex I subunit 3 family. In terms of assembly, core subunit of respiratory chain NADH dehydrogenase (Complex I) which is composed of 45 different subunits. Interacts with TMEM186. Interacts with TMEM242.

It is found in the mitochondrion inner membrane. The enzyme catalyses a ubiquinone + NADH + 5 H(+)(in) = a ubiquinol + NAD(+) + 4 H(+)(out). Its function is as follows. Core subunit of the mitochondrial membrane respiratory chain NADH dehydrogenase (Complex I) which catalyzes electron transfer from NADH through the respiratory chain, using ubiquinone as an electron acceptor. Essential for the catalytic activity of complex I. The chain is NADH-ubiquinone oxidoreductase chain 3 from Habromys lophurus (Crested-tailed deer mouse).